We begin with the raw amino-acid sequence, 305 residues long: Coiled-coil domain-containing protein 69 (305 aa).

The N-myristoyl glycine moiety is linked to residue Gly2. The segment at 13–41 (LRKKKRQKAHQEGLTSKELNDLNAKSQEP) is disordered. Coiled-coil stretches lie at residues 42 to 167 (NELL…SVLS) and 216 to 278 (MERN…KEQN).

This sequence belongs to the CCDC69 family.

The protein resides in the cytoplasm. Its subcellular location is the cytoskeleton. The protein localises to the spindle. It localises to the midbody. Functionally, may act as a scaffold to regulate the recruitment and assembly of spindle midzone components. The chain is Coiled-coil domain-containing protein 69 (ccdc69) from Xenopus tropicalis (Western clawed frog).